A 67-amino-acid chain; its full sequence is Large ribosomal subunit protein uL30 (67 aa).

The protein belongs to the universal ribosomal protein uL30 family. In terms of assembly, part of the 50S ribosomal subunit.

This Sinorhizobium medicae (strain WSM419) (Ensifer medicae) protein is Large ribosomal subunit protein uL30.